The following is a 120-amino-acid chain: Large ribosomal subunit protein uL18 (120 aa).

Positions 1-26 (MSKAKVTNARRKRSVRLKLRRSGGGR) are disordered. Residues 8 to 23 (NARRKRSVRLKLRRSG) show a composition bias toward basic residues.

The protein belongs to the universal ribosomal protein uL18 family. In terms of assembly, part of the 50S ribosomal subunit; part of the 5S rRNA/L5/L18/L25 subcomplex. Contacts the 5S and 23S rRNAs.

This is one of the proteins that bind and probably mediate the attachment of the 5S RNA into the large ribosomal subunit, where it forms part of the central protuberance. In Bradyrhizobium diazoefficiens (strain JCM 10833 / BCRC 13528 / IAM 13628 / NBRC 14792 / USDA 110), this protein is Large ribosomal subunit protein uL18.